A 150-amino-acid chain; its full sequence is C-C motif chemokine 25 (150 aa).

Positions 1-23 are cleaved as a signal peptide; the sequence is MNLWLLACLVAGFLGAWAPAVHT. Cystine bridges form between cysteine 30/cysteine 58 and cysteine 31/cysteine 75.

This sequence belongs to the intercrine beta (chemokine CC) family. As to expression, specifically expressed by thymic dendritic cells. High levels in thymus and small intestine.

The protein resides in the secreted. Potentially involved in T-cell development. Recombinant protein shows chemotactic activity on thymocytes, macrophages, THP-1 cells, and dendritics cells but is inactive on peripheral blood lymphocytes and neutrophils. Binds to CCR9. Isoform 2 is an antagonist of isoform 1. Binds to atypical chemokine receptor ACKR4 and mediates the recruitment of beta-arrestin (ARRB1/2) to ACKR4. This Homo sapiens (Human) protein is C-C motif chemokine 25 (CCL25).